Consider the following 213-residue polypeptide: Methylthioribulose-1-phosphate dehydratase (213 aa).

Residues histidine 104 and histidine 106 each coordinate Zn(2+).

It belongs to the aldolase class II family. MtnB subfamily. It depends on Zn(2+) as a cofactor.

It carries out the reaction 5-(methylsulfanyl)-D-ribulose 1-phosphate = 5-methylsulfanyl-2,3-dioxopentyl phosphate + H2O. It participates in amino-acid biosynthesis; L-methionine biosynthesis via salvage pathway; L-methionine from S-methyl-5-thio-alpha-D-ribose 1-phosphate: step 2/6. Its function is as follows. Catalyzes the dehydration of methylthioribulose-1-phosphate (MTRu-1-P) into 2,3-diketo-5-methylthiopentyl-1-phosphate (DK-MTP-1-P). The protein is Methylthioribulose-1-phosphate dehydratase of Stenotrophomonas maltophilia (strain K279a).